A 195-amino-acid polypeptide reads, in one-letter code: Imidazoleglycerol-phosphate dehydratase (195 aa).

This sequence belongs to the imidazoleglycerol-phosphate dehydratase family.

It localises to the cytoplasm. It carries out the reaction D-erythro-1-(imidazol-4-yl)glycerol 3-phosphate = 3-(imidazol-4-yl)-2-oxopropyl phosphate + H2O. The protein operates within amino-acid biosynthesis; L-histidine biosynthesis; L-histidine from 5-phospho-alpha-D-ribose 1-diphosphate: step 6/9. In Koribacter versatilis (strain Ellin345), this protein is Imidazoleglycerol-phosphate dehydratase.